The primary structure comprises 439 residues: Microfibrillar-associated protein 1 (439 aa).

Disordered regions lie at residues Met1 to Gly27 and Tyr39 to Lys200. An N-acetylserine modification is found at Ser2. Ser52 and Ser53 each carry phosphoserine. The segment covering Gln61–Glu70 has biased composition (basic and acidic residues). Lys67 participates in a covalent cross-link: Glycyl lysine isopeptide (Lys-Gly) (interchain with G-Cter in SUMO2). Over residues Ala71–Ser81 the composition is skewed to acidic residues. A phosphoserine mark is found at Ser94, Ser116, Ser118, Ser132, and Ser133. Composition is skewed to acidic residues over residues Val112–Gly122 and Asp131–Glu144. Residues Ile145–Glu163 are compositionally biased toward basic and acidic residues. The span at Glu178–Met195 shows a compositional bias: acidic residues. Lys249 participates in a covalent cross-link: Glycyl lysine isopeptide (Lys-Gly) (interchain with G-Cter in SUMO2). Position 267 is a phosphothreonine (Thr267). Residue Lys357 forms a Glycyl lysine isopeptide (Lys-Gly) (interchain with G-Cter in SUMO2) linkage. Ser361 carries the post-translational modification Phosphoserine. Glycyl lysine isopeptide (Lys-Gly) (interchain with G-Cter in SUMO2) cross-links involve residues Lys371, Lys381, Lys415, and Lys418. Ser432 bears the Phosphoserine mark.

The protein belongs to the MFAP1 family. In terms of assembly, component of the spliceosome B complex. Interacts with PRPF38A (via N-terminal interaction domain).

Its subcellular location is the nucleus. Involved in pre-mRNA splicing as a component of the spliceosome. This Homo sapiens (Human) protein is Microfibrillar-associated protein 1.